The following is a 435-amino-acid chain: tRNA modification GTPase MnmE (435 aa).

(6S)-5-formyl-5,6,7,8-tetrahydrofolate contacts are provided by arginine 20, glutamate 77, and lysine 117. Positions 214–359 (GLKIVIAGAP…FIKKLESFCH (146 aa)) constitute a TrmE-type G domain. Residues 224–229 (NSGKSS), 243–249 (TEEAGTT), and 268–271 (DTAG) contribute to the GTP site. Positions 228 and 249 each coordinate Mg(2+). Position 435 (lysine 435) interacts with (6S)-5-formyl-5,6,7,8-tetrahydrofolate.

The protein belongs to the TRAFAC class TrmE-Era-EngA-EngB-Septin-like GTPase superfamily. TrmE GTPase family. Homodimer. Heterotetramer of two MnmE and two MnmG subunits. Requires K(+) as cofactor.

Its subcellular location is the cytoplasm. Exhibits a very high intrinsic GTPase hydrolysis rate. Involved in the addition of a carboxymethylaminomethyl (cmnm) group at the wobble position (U34) of certain tRNAs, forming tRNA-cmnm(5)s(2)U34. This Bartonella tribocorum (strain CIP 105476 / IBS 506) protein is tRNA modification GTPase MnmE.